A 119-amino-acid polypeptide reads, in one-letter code: Ribonuclease P protein component (119 aa).

It belongs to the RnpA family. In terms of assembly, consists of a catalytic RNA component (M1 or rnpB) and a protein subunit.

The catalysed reaction is Endonucleolytic cleavage of RNA, removing 5'-extranucleotides from tRNA precursor.. RNaseP catalyzes the removal of the 5'-leader sequence from pre-tRNA to produce the mature 5'-terminus. It can also cleave other RNA substrates such as 4.5S RNA. The protein component plays an auxiliary but essential role in vivo by binding to the 5'-leader sequence and broadening the substrate specificity of the ribozyme. The polypeptide is Ribonuclease P protein component (Citrobacter koseri (strain ATCC BAA-895 / CDC 4225-83 / SGSC4696)).